Reading from the N-terminus, the 130-residue chain is Cystatin domain-containing protein 1 (130 aa).

The signal sequence occupies residues 1–23; the sequence is MSWKVPMLVGLVVLGTHIWTINK. A Cystatin domain is found at 37–116; sequence ASVEFAVAQF…CVFQVDARPW (80 aa). Disulfide bonds link Cys-84/Cys-94 and Cys-107/Cys-127.

The protein belongs to the cystatin family.

Its subcellular location is the secreted. Functionally, may play a specialized role in spermatogenesis. This Rattus norvegicus (Rat) protein is Cystatin domain-containing protein 1.